The chain runs to 324 residues: MANTPLIVSFGEMLIDFVPDTSGVSLAESTGFLKAPGGAPANVACAITKLGGKSAFIGKFGDDEFGHMLVNILKKNGVNSEGVCFDTNARTALAFVTLKKDGEREFMFYRNPSADMLLKESELNKDLIKKAKIFHYGSISLISEPCRTAHMAAMKTAKDAGVLLSYDPNVRLPLWPSTEAAIEGIKSIWNEADIIKVSDDEVTFLTRGDAEKDDVVLSLMHDKLKLLIVTDGEKGCRYYTKKFKGRVPGYAVKAVDTTGAGDSFVGAFLVSLGKDGSILDDEGKLKEALAFANACGAVCTTQKGAIPALPTPADAQKLMKSKSK.

Belongs to the carbohydrate kinase PfkB family.

It catalyses the reaction D-fructose + ATP = D-fructose 6-phosphate + ADP + H(+). The protein operates within glycan biosynthesis; starch biosynthesis. Its function is as follows. May play an important role in maintaining the flux of carbon towards starch formation. This is Probable fructokinase-5 from Arabidopsis thaliana (Mouse-ear cress).